Here is a 135-residue protein sequence, read N- to C-terminus: ATP synthase epsilon chain 1 (135 aa).

This sequence belongs to the ATPase epsilon chain family. As to quaternary structure, F-type ATPases have 2 components, CF(1) - the catalytic core - and CF(0) - the membrane proton channel. CF(1) has five subunits: alpha(3), beta(3), gamma(1), delta(1), epsilon(1). CF(0) has three main subunits: a, b and c.

The protein resides in the cell inner membrane. Functionally, produces ATP from ADP in the presence of a proton gradient across the membrane. The sequence is that of ATP synthase epsilon chain 1 from Nitrobacter hamburgensis (strain DSM 10229 / NCIMB 13809 / X14).